Reading from the N-terminus, the 364-residue chain is Pectinesterase 1 (364 aa).

A signal peptide spans 1–22 (MSCIAVEAVLLGILLYIPIVLS). Residue Asn-103 is glycosylated (N-linked (GlcNAc...) asparagine). The active site involves Asp-220.

Belongs to the pectinesterase family. In terms of processing, glycosylated. As to expression, expressed in pollen.

It localises to the secreted. It catalyses the reaction [(1-&gt;4)-alpha-D-galacturonosyl methyl ester](n) + n H2O = [(1-&gt;4)-alpha-D-galacturonosyl](n) + n methanol + n H(+). Its pathway is glycan metabolism; pectin degradation; 2-dehydro-3-deoxy-D-gluconate from pectin: step 1/5. Its function is as follows. Catalyzes the demethylesterification of homogalacturonan components of pectin. May be involved in pollen tube development. In Olea europaea (Common olive), this protein is Pectinesterase 1.